The sequence spans 191 residues: Flagellar transcriptional regulator FlhC (191 aa).

Cys139, Cys142, Cys159, and Cys162 together coordinate Zn(2+).

Belongs to the FlhC family. As to quaternary structure, heterohexamer composed of two FlhC and four FlhD subunits. Each FlhC binds a FlhD dimer, forming a heterotrimer, and a hexamer assembles by dimerization of two heterotrimers. Zn(2+) serves as cofactor.

Its subcellular location is the cytoplasm. Functions in complex with FlhD as a master transcriptional regulator that regulates transcription of several flagellar and non-flagellar operons by binding to their promoter region. Activates expression of class 2 flagellar genes, including fliA, which is a flagellum-specific sigma factor that turns on the class 3 genes. Also regulates genes whose products function in a variety of physiological pathways. The protein is Flagellar transcriptional regulator FlhC of Enterobacter cloacae subsp. cloacae (strain ATCC 13047 / DSM 30054 / NBRC 13535 / NCTC 10005 / WDCM 00083 / NCDC 279-56).